Reading from the N-terminus, the 238-residue chain is tRNA (guanine-N(7)-)-methyltransferase (238 aa).

Residues Glu-70, Asp-95, Asp-122, and Asp-145 each contribute to the S-adenosyl-L-methionine site. Residue Asp-145 is part of the active site. Substrate-binding positions include Lys-149, Asp-181, and Thr-216–Glu-219.

This sequence belongs to the class I-like SAM-binding methyltransferase superfamily. TrmB family.

It catalyses the reaction guanosine(46) in tRNA + S-adenosyl-L-methionine = N(7)-methylguanosine(46) in tRNA + S-adenosyl-L-homocysteine. It participates in tRNA modification; N(7)-methylguanine-tRNA biosynthesis. Catalyzes the formation of N(7)-methylguanine at position 46 (m7G46) in tRNA. This chain is tRNA (guanine-N(7)-)-methyltransferase, found in Neisseria meningitidis serogroup B (strain ATCC BAA-335 / MC58).